The chain runs to 120 residues: Cell division protein FtsL (120 aa).

Over 1 to 36 (MSNLAVKYKQQAQEEVQIQTPPQQMVQPKAKAKITR) the chain is Cytoplasmic. Residues 37 to 57 (IEKLLYVAFIGFLLYACVAFI) traverse the membrane as a helical segment. Residues 58–120 (GNKAGLYQVN…INANNVKGLK (63 aa)) are Extracellular-facing.

Belongs to the FtsL family.

The protein resides in the cell membrane. Its function is as follows. Essential cell division protein. The polypeptide is Cell division protein FtsL (Bacillus anthracis).